Reading from the N-terminus, the 355-residue chain is MSIIINNVSKQFGDFTALKDINLEVPDGKLVALLGPSGSGKSTLLRAIAGLEEPDQGQIIINGQDATHVDIRKRNIGFVFQHYALFKHLTIRQNIAFGLEIRKHPPAKTKERVEELLSLIQLEGLGNRYPSQLSGGQRQRVALARALAVQPQVLLLDEPFGALDAKVRKELRAWLRKLHDEVHLTSVFVTHDQEEAMEVADEIVVMSNGKIEQVGTAEEIYEHPASPFVMGFIGEVNVLPRNASLFNYHAFEPHSSNNGHQEPVFVRPHDFELLTEADDASVAGTIKRVIHLGSEIQVEVLLMDNTAVLAYLNREQGQQLNPKAGKKVFIKPRVAKVFAGASSAASTHFIYGTGI.

Positions 3 to 233 constitute an ABC transporter domain; sequence IIINNVSKQF…PASPFVMGFI (231 aa). 35–42 contributes to the ATP binding site; the sequence is GPSGSGKS.

Belongs to the ABC transporter superfamily. Sulfate/tungstate importer (TC 3.A.1.6) family. As to quaternary structure, the complex is composed of two ATP-binding proteins (CysA), two transmembrane proteins (CysT and CysW) and a solute-binding protein (CysP).

The protein localises to the cell inner membrane. It carries out the reaction sulfate(out) + ATP + H2O = sulfate(in) + ADP + phosphate + H(+). The catalysed reaction is thiosulfate(out) + ATP + H2O = thiosulfate(in) + ADP + phosphate + H(+). Part of the ABC transporter complex CysAWTP involved in sulfate/thiosulfate import. Responsible for energy coupling to the transport system. The protein is Sulfate/thiosulfate import ATP-binding protein CysA of Synechocystis sp. (strain ATCC 27184 / PCC 6803 / Kazusa).